Here is a 255-residue protein sequence, read N- to C-terminus: Receptor expression-enhancing protein 3 (255 aa).

A run of 3 helical transmembrane segments spans residues 1–21, 35–55, and 59–79; these read MVSWMISRAVVLVFGMLYPAY, YVRWMMYWIVFALYTVIETVA, and VAWFPLYYELKIAFVIWLLSP. The interval 158-242 is disordered; sequence TIQGDEPVGQ…KGRKEVRYGS (85 aa). A Phosphothreonine modification is found at Thr201. A Phosphoserine modification is found at Ser210. The segment covering 222–231 has biased composition (polar residues); that stretch reads RSQSMKSVKT.

Belongs to the DP1 family. As to expression, expressed in circumvallate papillae.

Its subcellular location is the endoplasmic reticulum membrane. In terms of biological role, microtubule-binding protein required to ensure proper cell division and nuclear envelope reassembly by sequestering the endoplasmic reticulum away from chromosomes during mitosis. Probably acts by clearing the endoplasmic reticulum membrane from metaphase chromosomes. The chain is Receptor expression-enhancing protein 3 (REEP3) from Homo sapiens (Human).